The following is a 106-amino-acid chain: UPF0060 membrane protein RL1530 (106 aa).

4 helical membrane passes run 4 to 24 (IIFA…WAWL), 30 to 50 (VWWL…LTLV), 58 to 78 (TFAA…WLVE), and 86 to 106 (DIGG…APRG).

This sequence belongs to the UPF0060 family.

The protein localises to the cell inner membrane. The sequence is that of UPF0060 membrane protein RL1530 from Rhizobium johnstonii (strain DSM 114642 / LMG 32736 / 3841) (Rhizobium leguminosarum bv. viciae).